A 166-amino-acid polypeptide reads, in one-letter code: Small ribosomal subunit protein bS18m (166 aa).

The N-terminal 31 residues, 1-31 (MLGRRIFSPAPNRGFILCNLIQSNNSTRRGF), are a transit peptide targeting the mitochondrion. Residues 29-48 (RGFSDNRKFNERNSEASSNV) form a disordered region. Positions 30–42 (GFSDNRKFNERNS) are enriched in basic and acidic residues.

The protein belongs to the bacterial ribosomal protein bS18 family. Component of the mitochondrial small ribosomal subunit (mt-SSU). Mature yeast 74S mitochondrial ribosomes consist of a small (37S) and a large (54S) subunit. The 37S small subunit contains a 15S ribosomal RNA (15S mt-rRNA) and at least 32 different proteins. The 54S large subunit contains a 21S rRNA (21S mt-rRNA) and at least 45 different proteins.

The protein localises to the mitochondrion. Functionally, component of the mitochondrial ribosome (mitoribosome), a dedicated translation machinery responsible for the synthesis of mitochondrial genome-encoded proteins, including at least some of the essential transmembrane subunits of the mitochondrial respiratory chain. The mitoribosomes are attached to the mitochondrial inner membrane and translation products are cotranslationally integrated into the membrane. The chain is Small ribosomal subunit protein bS18m (rsm18) from Schizosaccharomyces pombe (strain 972 / ATCC 24843) (Fission yeast).